The following is a 317-amino-acid chain: MVVSLKGRDLLCLQDYTPEEIWTILETAKMFKIWQKIGKPHRLLEGKTLAMIFQKPSTRTRVSFEVAMAHLGGHALYLNAQDLQLRRGETIADTARVLSRYVDAIMARVYAHKDVEDLAKYASVPVINGLSDFSHPCQALADYMTIWEKKGTIKGVKVVYVGDGNNVCHSLMIAGTKLGADVVVATPEGYEPDKKVIKWAEQNAAESGGSFELLHDPVKAVKDADVIYTDVWASMGQEAEAEERRKIFRPFQVNKDLVKHAKSDYMFMHCLPAHRGEEVTDDVIDSPNSVVWDEAENRLHAQKAVLALLLGGVKTGF.

Residues 57–60 (STRT), Gln84, Arg108, and 135–138 (HPCQ) contribute to the carbamoyl phosphate site. Residues Asn166, Asp230, and 234 to 235 (SM) contribute to the L-ornithine site. Residues 270-271 (CL) and Arg298 contribute to the carbamoyl phosphate site.

It belongs to the aspartate/ornithine carbamoyltransferase superfamily. OTCase family. In terms of assembly, homododecamer.

The protein localises to the cytoplasm. The enzyme catalyses carbamoyl phosphate + L-ornithine = L-citrulline + phosphate + H(+). Its pathway is amino-acid biosynthesis; L-arginine biosynthesis; L-arginine from L-ornithine and carbamoyl phosphate: step 1/3. Its function is as follows. Reversibly catalyzes the transfer of the carbamoyl group from carbamoyl phosphate (CP) to the N(epsilon) atom of ornithine (ORN) to produce L-citrulline. The sequence is that of Ornithine carbamoyltransferase from Pyrococcus horikoshii (strain ATCC 700860 / DSM 12428 / JCM 9974 / NBRC 100139 / OT-3).